A 414-amino-acid polypeptide reads, in one-letter code: E3 ubiquitin-protein ligase makorin-2 (414 aa).

2 consecutive C3H1-type zinc fingers follow at residues 2-29 (STKQVTCRYFLHGVCREGSRCLFSHDLT) and 31-58 (SKPSTICKYYQRGACAYGDRCRYDHIKP). The tract at residues 57–94 (KPPGRGSGAPADHSNRSSSSAGASAPGPGPPANTSKHL) is disordered. The span at 73–82 (SSSSAGASAP) shows a compositional bias: low complexity. The C3H1-type 3 zinc finger occupies 164 to 191 (QTSPQICPFLAAGQCQYGESCPYLHGEM). Positions 192–221 (CEICRQHVLHPHDPEQRAAHEKKCMVAFEM) are makorin-type Cys-His. An RING-type zinc finger spans residues 237–291 (CKICLDVVYEKSSPSERRFGILSSCAHTYCLNCIRQWRCVEQLHNQIRKSCPECR). The C3H1-type 4 zinc finger occupies 320 to 349 (GVSKKACKYFDQGRGTCPFGGKCFYMHAYA).

Its subcellular location is the cytoplasm. The protein localises to the nucleus. It catalyses the reaction S-ubiquitinyl-[E2 ubiquitin-conjugating enzyme]-L-cysteine + [acceptor protein]-L-lysine = [E2 ubiquitin-conjugating enzyme]-L-cysteine + N(6)-ubiquitinyl-[acceptor protein]-L-lysine.. The protein operates within protein modification; protein ubiquitination. E3 ubiquitin ligase catalyzing the covalent attachment of ubiquitin moieties onto substrate proteins. Inhibits neurogenesis and axis formation during embryonic development by modulating the phosphatidylinositol 3-kinase (PI3K) pathway. Acts downstream of PI3K and akt1 to up-regulate gsk3b mRNA expression. The polypeptide is E3 ubiquitin-protein ligase makorin-2 (mkrn2) (Danio rerio (Zebrafish)).